A 155-amino-acid polypeptide reads, in one-letter code: Small ribosomal subunit protein eS19 (155 aa).

This sequence belongs to the eukaryotic ribosomal protein eS19 family. Component of the small ribosomal subunit.

Its subcellular location is the cytoplasm. In terms of biological role, component of the small ribosomal subunit. The ribosome is a large ribonucleoprotein complex responsible for the synthesis of proteins in the cell. Required for proper maturation of the small (40S) ribosomal subunit. The polypeptide is Small ribosomal subunit protein eS19 (RPS19) (Entamoeba histolytica (strain ATCC 30459 / HM-1:IMSS / ABRM)).